A 403-amino-acid chain; its full sequence is Argininosuccinate synthase (403 aa).

ATP is bound by residues 13–21 (AYSGGLDTS) and Ala40. The L-citrulline site is built by Tyr92 and Ser97. Residue Gly122 coordinates ATP. The L-aspartate site is built by Thr124, Asn128, and Asp129. Asn128 contributes to the L-citrulline binding site. L-citrulline contacts are provided by Arg132, Ser181, Ser190, Glu266, and Tyr278.

The protein belongs to the argininosuccinate synthase family. Type 1 subfamily. Homotetramer.

It localises to the cytoplasm. The enzyme catalyses L-citrulline + L-aspartate + ATP = 2-(N(omega)-L-arginino)succinate + AMP + diphosphate + H(+). It participates in amino-acid biosynthesis; L-arginine biosynthesis; L-arginine from L-ornithine and carbamoyl phosphate: step 2/3. The polypeptide is Argininosuccinate synthase (Aliivibrio salmonicida (strain LFI1238) (Vibrio salmonicida (strain LFI1238))).